The sequence spans 311 residues: T-cell immunomodulatory protein (311 aa).

N-linked (GlcNAc...) asparagine glycosylation is found at Asn52, Asn70, and Asn181. The chain crosses the membrane as a helical span at residues 266–286; it reads VLLTAIALIGVCVFILAIIGI.

This sequence belongs to the TIP family. As to quaternary structure, interacts with RUVBL1, RUVBL2 and alpha-tubulin.

It is found in the secreted. It localises to the cell membrane. Its function is as follows. Modulator of T-cell function. Has a protective effect in graft versus host disease model. In Macaca fascicularis (Crab-eating macaque), this protein is T-cell immunomodulatory protein.